The sequence spans 530 residues: Carbohydrate sulfotransferase 2 (530 aa).

Residues 1–54 (MSRSPQRALPPGALPRLLQAAPAAAPRALLPQWPRRPGRRWPASPLGMKVFRRK) are Cytoplasmic-facing. The helical; Signal-anchor for type II membrane protein transmembrane segment at 55-75 (ALVLCAGYALLLVLTMLNLLD) threads the bilayer. Over 76–530 (YKWHKEPLQQ…SKTLLRKPRL (455 aa)) the chain is Lumenal. The tract at residues 89–119 (DGPLGAAAGAAGGSWGRPGPPPAGPPRAHAR) is disordered. 173 to 179 (WRSGSSF) lines the 3'-phosphoadenylyl sulfate pocket. N-linked (GlcNAc...) asparagine glycosylation occurs at asparagine 243. Position 332 to 340 (332 to 340 (RDPRAVASS)) interacts with 3'-phosphoadenylyl sulfate. Residues asparagine 457 and asparagine 475 are each glycosylated (N-linked (GlcNAc...) asparagine).

This sequence belongs to the sulfotransferase 1 family. Gal/GlcNAc/GalNAc subfamily. In terms of assembly, homodimer; disulfide-linked. Homodimerization is not essential for enzyme activity. Post-translationally, glycosylation at Asn-475 is required for catalytic activity. Widely expressed. Highly expressed in bone marrow, peripheral blood leukocytes, spleen, brain, spinal cord, ovary and placenta. Expressed by high endothelial cells (HEVs) and leukocytes.

Its subcellular location is the golgi apparatus. It localises to the trans-Golgi network membrane. It carries out the reaction 3-O-{N-acetyl-beta-D-glucosaminyl-(1-&gt;3)-beta-D-galactosyl-(1-&gt;3)-N-acetyl-alpha-D-galactosaminyl}-L-threonyl-[protein] + 3'-phosphoadenylyl sulfate = 3-O-{6-O-sulfo-N-acetyl-beta-D-glucosaminyl-(1-&gt;3)-beta-D-galactosyl-(1-&gt;3)-N-acetyl-alpha-D-galactosaminyl}-L-threonyl-[protein] + adenosine 3',5'-bisphosphate + H(+). The enzyme catalyses 3-O-{N-acetyl-beta-D-glucosaminyl-(1-&gt;3)-beta-D-galactosyl-(1-&gt;3)-N-acetyl-alpha-D-galactosaminyl}-L-seryl-[protein] + 3'-phosphoadenylyl sulfate = 3-O-{6-O-sulfo-N-acetyl-beta-D-glucosaminyl-(1-&gt;3)-beta-D-galactosyl-(1-&gt;3)-N-acetyl-alpha-D-galactosaminyl}-L-seryl-[protein] + adenosine 3',5'-bisphosphate + H(+). The catalysed reaction is a 3-O-{beta-D-galactosyl-(1-&gt;3)-[N-acetyl-beta-D-glucosaminyl-(1-&gt;6)]-N-acetyl-alpha-D-galactosaminyl}-L-threonyl-[protein] + 3'-phosphoadenylyl sulfate = 3-O-{beta-D-galactosyl-(1-&gt;3)-[6-O-sulfo-N-acetyl-beta-D-glucosaminyl-(1-&gt;6)]-N-acetyl-alpha-D-galactosaminyl}-L-threonyl-[protein] + adenosine 3',5'-bisphosphate + H(+). It catalyses the reaction 3-O-{beta-D-galactosyl-(1-&gt;3)-[N-acetyl-beta-D-glucosaminyl-(1-&gt;6)]-N-acetyl-alpha-D-galactosaminyl}-L-seryl-[protein] + 3'-phosphoadenylyl sulfate = 3-O-{beta-D-galactosyl-(1-&gt;3)-[6-O-sulfo-N-acetyl-beta-D-glucosaminyl-(1-&gt;6)]-N-acetyl-alpha-D-galactosaminyl}-L-seryl-[protein] + adenosine 3',5'-bisphosphate + H(+). The protein operates within protein modification; carbohydrate sulfation. Functionally, sulfotransferase that utilizes 3'-phospho-5'-adenylyl sulfate (PAPS) as sulfonate donor to catalyze the transfer of sulfate to position 6 of non-reducing N-acetylglucosamine (GlcNAc) residues within keratan-like structures on N-linked glycans and within mucin-associated glycans that can ultimately serve as SELL ligands. SELL ligands are present in high endothelial cells (HEVs) and play a central role in lymphocyte homing at sites of inflammation. Participates in biosynthesis of the SELL ligand sialyl 6-sulfo Lewis X and in lymphocyte homing to Peyer patches. Has no activity toward O-linked sugars. Its substrate specificity may be influenced by its subcellular location. Sulfates GlcNAc residues at terminal, non-reducing ends of oligosaccharide chains. The polypeptide is Carbohydrate sulfotransferase 2 (CHST2) (Homo sapiens (Human)).